The primary structure comprises 388 residues: Flavin-dependent monooxygenase (388 aa).

Residues 12 to 15 (VGVA), 34 to 36 (EKS), 44 to 47 (QALD), Arg-105, Tyr-267, Asp-289, and 296 to 302 (PLSGQGN) contribute to the FAD site.

It belongs to the aromatic-ring hydroxylase family. It depends on FAD as a cofactor.

The catalysed reaction is a tetracycline + NADPH + O2 + H(+) = a (1S,10aS)-3-(CONH2)-1-(Me2N)-3,3a,4,6-(HO)4-2,5-dioxo-1H,10aH,11H,11aH-cyclopenta[b]anthracene + CO + NADP(+) + H2O. The enzyme catalyses 7-chlorotetracycline + NADPH + O2 + H(+) = (1S,10S,10aS)-3-(CONH2)-9-Cl-1-(Me2N)-3,3a,4,10-(HO)4-10-Me-2,5-dioxo-1H,10aH,11H,11aH-cyclopenta[b]anthracen-6-olate + CO + NADP(+) + H2O. Its activity is regulated as follows. Inhibited by anhydrotetracycline. In terms of biological role, an FAD-requiring monooxygenase active on tetracycline antibiotic and some of its derivatives, which leads to their inactivation. Expression in E.coli confers high resistance to tetracycline and oxytetracycline, does not confer resistance to minocycline or tigecycline. Degrades tetracycline and oxytetracycline; the reaction requires NADPH. Degrades and confers resistance to chlortetracycline. The chain is Flavin-dependent monooxygenase (tet(50)) from Unknown prokaryotic organism.